Here is a 414-residue protein sequence, read N- to C-terminus: Patatin-like protein 1 (414 aa).

A PNPLA domain is found at 20 to 224; sequence LAIDGGGIRG…AANNPTMVAM (205 aa). Residues 24–29 carry the GXGXXG motif; the sequence is GGGIRG. The GXSXG signature appears at 62 to 66; the sequence is GTSTG. The Nucleophile role is filled by Ser-64. Catalysis depends on Asp-211, which acts as the Proton acceptor. Residues 211-213 carry the DGA/G motif; the sequence is DGG.

This sequence belongs to the patatin family.

Its function is as follows. Possesses non-specific lipolytic acyl hydrolase (LAH) activity. Hydrolyzes phospholipids as well as galactolipids. May play a role in disease resistance. The chain is Patatin-like protein 1 (PLP1) from Oryza sativa subsp. indica (Rice).